The chain runs to 180 residues: Pituitary tumor-transforming gene 1 protein-interacting protein (180 aa).

Positions 1–32 (MAPGVARGPTPYWRLRLGGAALLLLLIPVAAA) are cleaved as a signal peptide. Over 33–96 (QEPPGAACSQ…RWGVCWVNFE (64 aa)) the chain is Extracellular. The 54-residue stretch at 39 to 92 (ACSQNTNKTCEECLKNVSCLWCNTNKACLDYPVTSVLPPASLCKLSSARWGVCW) folds into the PSI domain. N-linked (GlcNAc...) asparagine glycans are attached at residues Asn45 and Asn54. Residues 97-117 (ALIITMSVVGGTLLLGIAICC) traverse the membrane as a helical segment. The Cytoplasmic portion of the chain corresponds to 118–180 (CCCCRRKRSR…ENPYARFENN (63 aa)). The stretch at 130 to 165 (DRSEEKAMREREERRIRQEERRAEMKTRHDEIRKKY) forms a coiled coil. The segment at 131–157 (RSEEKAMREREERRIRQEERRAEMKTR) is disordered. Position 174 is a phosphotyrosine (Tyr174).

Interacts with PTTG1. In terms of tissue distribution, ubiquitous.

It is found in the membrane. The protein resides in the cytoplasm. Its subcellular location is the nucleus. In terms of biological role, may facilitate PTTG1 nuclear translocation. The sequence is that of Pituitary tumor-transforming gene 1 protein-interacting protein (PTTG1IP) from Homo sapiens (Human).